A 93-amino-acid chain; its full sequence is MKEQTPIRKAVALHYDEQKDKAPRVIATGKGHVADNIIKEAKKAGVPIQEDRTLVELMRHLTVDDQIPEALYETVAEIFSFIYKLDESVKNKK.

This is an uncharacterized protein from Bacillus subtilis (strain 168).